A 379-amino-acid chain; its full sequence is Cytochrome b (379 aa).

Transmembrane regions (helical) follow at residues 33–53 (FGSL…FLAM), 77–98 (WLIR…FIHV), 113–133 (WNIG…GYVL), and 178–198 (FFAF…VHLL). Heme b contacts are provided by His-83 and His-97. His-182 and His-196 together coordinate heme b. Residue His-201 participates in a ubiquinone binding. 4 helical membrane-spanning segments follow: residues 226-246 (TKDL…ALFF), 288-308 (LGGV…PLLN), 320-340 (VTQV…WIGG), and 347-367 (FTTI…ILIP).

This sequence belongs to the cytochrome b family. In terms of assembly, the cytochrome bc1 complex contains 11 subunits: 3 respiratory subunits (MT-CYB, CYC1 and UQCRFS1), 2 core proteins (UQCRC1 and UQCRC2) and 6 low-molecular weight proteins (UQCRH/QCR6, UQCRB/QCR7, UQCRQ/QCR8, UQCR10/QCR9, UQCR11/QCR10 and a cleavage product of UQCRFS1). This cytochrome bc1 complex then forms a dimer. Requires heme b as cofactor.

The protein localises to the mitochondrion inner membrane. In terms of biological role, component of the ubiquinol-cytochrome c reductase complex (complex III or cytochrome b-c1 complex) that is part of the mitochondrial respiratory chain. The b-c1 complex mediates electron transfer from ubiquinol to cytochrome c. Contributes to the generation of a proton gradient across the mitochondrial membrane that is then used for ATP synthesis. This Akodon mystax (Caparao grass mouse) protein is Cytochrome b (MT-CYB).